The sequence spans 102 residues: Small ribosomal subunit protein uS10 (102 aa).

This sequence belongs to the universal ribosomal protein uS10 family. Part of the 30S ribosomal subunit.

Involved in the binding of tRNA to the ribosomes. This is Small ribosomal subunit protein uS10 from Finegoldia magna (strain ATCC 29328 / DSM 20472 / WAL 2508) (Peptostreptococcus magnus).